A 136-amino-acid polypeptide reads, in one-letter code: Protein BUNDLE SHEATH DEFECTIVE 2, chloroplastic (136 aa).

The N-terminal 56 residues, 1 to 56 (MANSLCFFSSPPTFCFQSPSKNPKPSHFFSTNDNTSSLVQKRELLQTSRSQSFEVK), are a transit peptide targeting the chloroplast. Residues 62–133 (PQGTKPNSLV…AGFIGGFLST (72 aa)) form a CR-type zinc finger. Residues cysteine 72, cysteine 75, glutamate 78, cysteine 80, cysteine 83, cysteine 86, cysteine 107, cysteine 110, glutamate 115, cysteine 118, and cysteine 121 each coordinate Zn(2+).

Belongs to the BSD2 chaperone family. Interacts with the RuBisCo large subunit (RbcL) assembled as an intermediate complex made of eight RbcL and eight BSD2 subunits.

The protein localises to the plastid. The protein resides in the chloroplast stroma. Functionally, chloroplast chaperone required for RuBisCo biogenesis and translational regulation of the RuBisCo large subunit (RbcL). Stabilizes an end-state assembly intermediate of eight RbcL subunits until the small subunits (RBCSs) become available to produce a complete stable RuBisCo complex containing eight small and eight large subunits. This chain is Protein BUNDLE SHEATH DEFECTIVE 2, chloroplastic, found in Arabidopsis thaliana (Mouse-ear cress).